The following is a 350-amino-acid chain: Galactokinase (350 aa).

Residue 15 to 18 (EHTD) coordinates substrate. Residues S47 and 99–105 (GAGLSSS) contribute to the ATP site. Positions 105 and 137 each coordinate Mg(2+). Residue D149 is the Proton acceptor of the active site. Y198 is a binding site for substrate.

It belongs to the GHMP kinase family. GalK subfamily.

The protein localises to the cytoplasm. The enzyme catalyses alpha-D-galactose + ATP = alpha-D-galactose 1-phosphate + ADP + H(+). The protein operates within carbohydrate metabolism; galactose metabolism. Catalyzes the transfer of the gamma-phosphate of ATP to D-galactose to form alpha-D-galactose-1-phosphate (Gal-1-P). In Pyrococcus horikoshii (strain ATCC 700860 / DSM 12428 / JCM 9974 / NBRC 100139 / OT-3), this protein is Galactokinase.